The following is a 367-amino-acid chain: Inactive serine protease 39 (367 aa).

Residues 1–31 (MWGSRAQQSGPDRGGACLLAAFLLCFSLLHA) form the signal peptide. The Peptidase S1 domain occupies 68–312 (IYGGQIAKAE…FSDWIKQKKA (245 aa)). 4 cysteine pairs are disulfide-bonded: cysteine 93/cysteine 109, cysteine 192/cysteine 269, cysteine 225/cysteine 248, and cysteine 259/cysteine 287.

It belongs to the peptidase S1 family. As to expression, expressed in testis. More specifically, abundantly expressed in the haploid round spermatid.

The protein resides in the cytoplasmic vesicle. Its subcellular location is the secretory vesicle. It localises to the acrosome. The protein localises to the secreted. Its function is as follows. May play an important role in the sperm/egg interaction; released during the acrosome reaction. The chain is Inactive serine protease 39 (Prss39) from Mus musculus (Mouse).